Here is a 399-residue protein sequence, read N- to C-terminus: Aromatic-amino-acid aminotransferase (399 aa).

Substrate contacts are provided by Gly-36, Tyr-67, Trp-132, and Asn-184. Lys-247 is modified (N6-(pyridoxal phosphate)lysine). Arg-375 serves as a coordination point for substrate.

The protein belongs to the class-I pyridoxal-phosphate-dependent aminotransferase family. As to quaternary structure, homodimer. Pyridoxal 5'-phosphate is required as a cofactor.

The protein resides in the cytoplasm. The enzyme catalyses an aromatic L-alpha-amino acid + 2-oxoglutarate = an aromatic oxo-acid + L-glutamate. This Pseudomonas aeruginosa (strain ATCC 15692 / DSM 22644 / CIP 104116 / JCM 14847 / LMG 12228 / 1C / PRS 101 / PAO1) protein is Aromatic-amino-acid aminotransferase (phhC).